Consider the following 493-residue polypeptide: Glutamyl-tRNA(Gln) amidotransferase subunit A (493 aa).

Residues Lys-78 and Ser-158 each act as charge relay system in the active site. The active-site Acyl-ester intermediate is the Ser-182.

Belongs to the amidase family. GatA subfamily. Heterotrimer of A, B and C subunits.

The catalysed reaction is L-glutamyl-tRNA(Gln) + L-glutamine + ATP + H2O = L-glutaminyl-tRNA(Gln) + L-glutamate + ADP + phosphate + H(+). Its function is as follows. Allows the formation of correctly charged Gln-tRNA(Gln) through the transamidation of misacylated Glu-tRNA(Gln) in organisms which lack glutaminyl-tRNA synthetase. The reaction takes place in the presence of glutamine and ATP through an activated gamma-phospho-Glu-tRNA(Gln). The chain is Glutamyl-tRNA(Gln) amidotransferase subunit A from Methylorubrum extorquens (strain CM4 / NCIMB 13688) (Methylobacterium extorquens).